Consider the following 610-residue polypeptide: UvrABC system protein C (610 aa).

The 79-residue stretch at 16 to 94 (SQPGVYRMYD…IKLYQPRYNV (79 aa)) folds into the GIY-YIG domain. Residues 204-239 (DQVLTQLIARMEKASQDLAFEEAARIRDQIQAVRRV) enclose the UVR domain.

The protein belongs to the UvrC family. Interacts with UvrB in an incision complex.

It localises to the cytoplasm. Functionally, the UvrABC repair system catalyzes the recognition and processing of DNA lesions. UvrC both incises the 5' and 3' sides of the lesion. The N-terminal half is responsible for the 3' incision and the C-terminal half is responsible for the 5' incision. The polypeptide is UvrABC system protein C (Salmonella dublin (strain CT_02021853)).